We begin with the raw amino-acid sequence, 618 residues long: GMC oxidoreductase family protein Mala s 12 (618 aa).

The first 23 residues, 1-23 (MKGIVSWAVVSAALVLSATESLA), serve as a signal peptide directing secretion. FAD is bound by residues valine 129 and valine 280. The active-site Proton donor is histidine 556. Residue histidine 599 is the Proton acceptor of the active site.

Belongs to the GMC oxidoreductase family. As to quaternary structure, monomer. It depends on FAD as a cofactor.

Its subcellular location is the secreted. The chain is GMC oxidoreductase family protein Mala s 12 from Malassezia sympodialis (strain ATCC 42132) (Atopic eczema-associated yeast).